Reading from the N-terminus, the 188-residue chain is Putative protein SSX9 (188 aa).

Positions 20-83 constitute a KRAB-related domain; that stretch reads KIQKAFDDIA…TGATDLQGND (64 aa). Residues 114-165 are disordered; the sequence is KKPAEVGNDSKEVPEASGLQNDGKQLCPPGKPTTSEKINKASGPKRGKHAWT. Basic and acidic residues predominate over residues 115-127; the sequence is KPAEVGNDSKEVP. Ser123 is subject to Phosphoserine. Residues 156 to 165 show a composition bias toward basic residues; that stretch reads GPKRGKHAWT.

This sequence belongs to the SSX family. In terms of tissue distribution, not detected in any normal or tumor tissues.

Could act as a modulator of transcription. The polypeptide is Putative protein SSX9 (Homo sapiens (Human)).